The chain runs to 353 residues: Feruloyl esterase B (353 aa).

The N-terminal stretch at 1 to 18 (MAIPLVLVLAWLLPVVLA) is a signal peptide. A catalytic region spans residues 19–291 (ASLTQVNNFG…VSVVLDWFGI (273 aa)). The active-site Charge relay system is the serine 136. 2 N-linked (GlcNAc...) asparagine glycosylation sites follow: asparagine 179 and asparagine 246. One can recognise a CBM1 domain in the interval 317–353 (CTAAHWAQCGGIGYSGCTACASPYTCQKANDYYSQCL).

This sequence belongs to the carbohydrate esterase 1 (CE1) family. Feruloyl esterase type B subfamily. In terms of processing, glycosylated.

It localises to the secreted. It catalyses the reaction feruloyl-polysaccharide + H2O = ferulate + polysaccharide.. With respect to regulation, inhibited by the specific serine esterase inhibitor AEBSF. Involved in degradation of plant cell walls. Hydrolyzes the feruloyl-arabinose ester bond in arabinoxylans, and the feruloyl-galactose and feruloyl-arabinose ester bonds in pectin. Binds strongly to cellulose. The sequence is that of Feruloyl esterase B (FAEB) from Talaromyces funiculosus (Fruitlet core rot fungus).